A 319-amino-acid chain; its full sequence is Acetyl-coenzyme A carboxylase carboxyl transferase subunit alpha (319 aa).

A CoA carboxyltransferase C-terminal domain is found at 32-293; it reads NVETEVRALR…KAVLLNELDA (262 aa).

It belongs to the AccA family. In terms of assembly, acetyl-CoA carboxylase is a heterohexamer composed of biotin carboxyl carrier protein (AccB), biotin carboxylase (AccC) and two subunits each of ACCase subunit alpha (AccA) and ACCase subunit beta (AccD).

Its subcellular location is the cytoplasm. It carries out the reaction N(6)-carboxybiotinyl-L-lysyl-[protein] + acetyl-CoA = N(6)-biotinyl-L-lysyl-[protein] + malonyl-CoA. It participates in lipid metabolism; malonyl-CoA biosynthesis; malonyl-CoA from acetyl-CoA: step 1/1. Component of the acetyl coenzyme A carboxylase (ACC) complex. First, biotin carboxylase catalyzes the carboxylation of biotin on its carrier protein (BCCP) and then the CO(2) group is transferred by the carboxyltransferase to acetyl-CoA to form malonyl-CoA. The chain is Acetyl-coenzyme A carboxylase carboxyl transferase subunit alpha from Xanthomonas oryzae pv. oryzae (strain MAFF 311018).